The sequence spans 169 residues: Cuticle protein 21 (169 aa).

6 consecutive repeat copies span residues 21–24 (AAPV), 27–30 (AAPA), 33–36 (AAPV), 39–42 (AAPA), 47–50 (AAPV), and 53–56 (AAPA). In terms of domain architecture, Chitin-binding type R&amp;R spans 65 to 135 (NPQYSYAYNV…KEAGAHPAPV (71 aa)). Repeat copies occupy residues 140–143 (AAPV), 146–149 (AAPA), and 160–163 (AAPA).

Functionally, component of the cuticle of migratory locust which contains more than 100 different structural proteins. The protein is Cuticle protein 21 (ACP21) of Locusta migratoria (Migratory locust).